The primary structure comprises 396 residues: Activity-regulated cytoskeleton-associated protein (396 aa).

A coiled-coil region spans residues 54–78 (SKQVERELKGLHRSVGKLESNLDGY). Residues 89 to 100 (KSIKACLCRCQE) are interaction with SH3GL1 or SH3GL3. The interaction with DNM2 stretch occupies residues 195–214 (QPWVPGEDGQPSPGVDTQIF). Phosphoserine is present on Ser-260. Residues Lys-268 and Lys-269 each participate in a glycyl lysine isopeptide (Lys-Gly) (interchain with G-Cter in ubiquitin) cross-link. Residue Thr-278 is modified to Phosphothreonine. The tract at residues 356–396 (QDDLEQAAEPAGPHLPVEDEAETLTPAPNSESVASDRTQPE) is disordered. Polar residues predominate over residues 381–396 (PAPNSESVASDRTQPE).

It belongs to the ARC/ARG3.1 family. Homooligomer; homooligomerizes into virion-like capsids. Interacts with SH3GL1/endophilin-2, SH3GL3/endophilin-3 and DNM2/DYN2. Interacts with CAMK2B (in the kinase inactive state); leading to target ARC to inactive synapses. Interacts with PSEN1. Post-translationally, palmitoylation anchors the protein into the membrane by allowing direct insertion into the hydrophobic core of the lipid bilayer. Ubiquitinated by UBE3A, leading to its degradation by the proteasome, thereby promoting AMPA receptors (AMPARs) expression at synapses. Ubiquitinated by RNF216 at Lys-268 and Lys-269 limiting ARC protein levels induced by synaptic activity and thus regulating ARC-dependent forms of synaptic plasticity. In terms of processing, phosphorylation at Ser-260 by CaMK2 prevents homooligomerization into virion-like capsids by disrupting an interaction surface essential for high-order oligomerization. Phosphorylation by CaMK2 inhibits synaptic activity.

The protein resides in the extracellular vesicle membrane. Its subcellular location is the postsynaptic cell membrane. It is found in the synapse. It localises to the postsynaptic density. The protein localises to the early endosome membrane. The protein resides in the cell projection. Its subcellular location is the dendrite. It is found in the cytoplasm. It localises to the cytoskeleton. The protein localises to the cell cortex. The protein resides in the dendritic spine. Its subcellular location is the cytoplasmic vesicle. It is found in the secretory vesicle. It localises to the acrosome. The protein localises to the clathrin-coated vesicle membrane. Master regulator of synaptic plasticity that self-assembles into virion-like capsids that encapsulate RNAs and mediate intercellular RNA transfer in the nervous system. ARC protein is released from neurons in extracellular vesicles that mediate the transfer of ARC mRNA into new target cells, where ARC mRNA can undergo activity-dependent translation. ARC capsids are endocytosed and are able to transfer ARC mRNA into the cytoplasm of neurons. Acts as a key regulator of synaptic plasticity: required for protein synthesis-dependent forms of long-term potentiation (LTP) and depression (LTD) and for the formation of long-term memory. Regulates synaptic plasticity by promoting endocytosis of AMPA receptors (AMPARs) in response to synaptic activity: this endocytic pathway maintains levels of surface AMPARs in response to chronic changes in neuronal activity through synaptic scaling, thereby contributing to neuronal homeostasis. Acts as a postsynaptic mediator of activity-dependent synapse elimination in the developing cerebellum by mediating elimination of surplus climbing fiber synapses. Accumulates at weaker synapses, probably to prevent their undesired enhancement. This suggests that ARC-containing virion-like capsids may be required to eliminate synaptic material. Required to transduce experience into long-lasting changes in visual cortex plasticity and for long-term memory. Involved in postsynaptic trafficking and processing of amyloid-beta A4 (APP) via interaction with PSEN1. In addition to its role in synapses, also involved in the regulation of the immune system: specifically expressed in skin-migratory dendritic cells and regulates fast dendritic cell migration, thereby regulating T-cell activation. This is Activity-regulated cytoskeleton-associated protein from Homo sapiens (Human).